A 312-amino-acid polypeptide reads, in one-letter code: DNA-directed RNA polymerase subunit alpha (312 aa).

The alpha N-terminal domain (alpha-NTD) stretch occupies residues methionine 1 to threonine 226. Positions asparagine 242–lysine 312 are alpha C-terminal domain (alpha-CTD).

This sequence belongs to the RNA polymerase alpha chain family. As to quaternary structure, homodimer. The RNAP catalytic core consists of 2 alpha, 1 beta, 1 beta' and 1 omega subunit. When a sigma factor is associated with the core the holoenzyme is formed, which can initiate transcription.

The catalysed reaction is RNA(n) + a ribonucleoside 5'-triphosphate = RNA(n+1) + diphosphate. DNA-dependent RNA polymerase catalyzes the transcription of DNA into RNA using the four ribonucleoside triphosphates as substrates. The chain is DNA-directed RNA polymerase subunit alpha from Streptococcus agalactiae serotype Ia (strain ATCC 27591 / A909 / CDC SS700).